Here is a 383-residue protein sequence, read N- to C-terminus: ATP phosphoribosyltransferase regulatory subunit (383 aa).

The protein belongs to the class-II aminoacyl-tRNA synthetase family. HisZ subfamily. Heteromultimer composed of HisG and HisZ subunits.

Its subcellular location is the cytoplasm. It participates in amino-acid biosynthesis; L-histidine biosynthesis; L-histidine from 5-phospho-alpha-D-ribose 1-diphosphate: step 1/9. Required for the first step of histidine biosynthesis. May allow the feedback regulation of ATP phosphoribosyltransferase activity by histidine. In Cupriavidus pinatubonensis (strain JMP 134 / LMG 1197) (Cupriavidus necator (strain JMP 134)), this protein is ATP phosphoribosyltransferase regulatory subunit.